Reading from the N-terminus, the 270-residue chain is Bis(5'-nucleosyl)-tetraphosphatase, symmetrical (270 aa).

The protein belongs to the Ap4A hydrolase family.

The catalysed reaction is P(1),P(4)-bis(5'-adenosyl) tetraphosphate + H2O = 2 ADP + 2 H(+). Functionally, hydrolyzes diadenosine 5',5'''-P1,P4-tetraphosphate to yield ADP. The protein is Bis(5'-nucleosyl)-tetraphosphatase, symmetrical of Actinobacillus pleuropneumoniae serotype 3 (strain JL03).